A 1601-amino-acid chain; its full sequence is Ectopic P granules protein 5 (1601 aa).

The segment at 1–109 (MAELVRPKKP…EAPPIPARNL (109 aa)) is disordered. Positions 15 to 26 (RPQSDDAPRIPD) are enriched in basic and acidic residues.

It belongs to the EPG5 family.

Its subcellular location is the cytoplasm. In terms of biological role, involved in autophagy. Has a role in the degradation of protein aggregates within autophagosomes. Essential for starvation-induced autotrophy and omegasome development. This chain is Ectopic P granules protein 5 (epg-5), found in Caenorhabditis briggsae.